Consider the following 180-residue polypeptide: Telokin-like protein 20 (180 aa).

Positions 112-180 are disordered; that stretch reads SKTDAAVHTS…KQKLDNAKQD (69 aa). Residues 156-165 show a composition bias toward acidic residues; it reads DFEENIDDGD.

The polypeptide is Telokin-like protein 20 (TLP20) (Lepidoptera (butterflies and moths)).